Here is a 151-residue protein sequence, read N- to C-terminus: Small ribosomal subunit protein uS15 (151 aa).

The protein belongs to the universal ribosomal protein uS15 family.

The sequence is that of Small ribosomal subunit protein uS15 (RPS13) from Ciona intestinalis (Transparent sea squirt).